A 37-amino-acid chain; its full sequence is Large ribosomal subunit protein bL36 (37 aa).

Belongs to the bacterial ribosomal protein bL36 family.

The sequence is that of Large ribosomal subunit protein bL36 from Aliivibrio fischeri (strain ATCC 700601 / ES114) (Vibrio fischeri).